Here is a 104-residue protein sequence, read N- to C-terminus: NADH-quinone oxidoreductase subunit K (104 aa).

3 consecutive transmembrane segments (helical) span residues 4–24, 28–48, and 64–84; these read VAYY…AFLI, IITI…SFVA, and IFVF…LAII.

This sequence belongs to the complex I subunit 4L family. In terms of assembly, NDH-1 is composed of 14 different subunits. Subunits NuoA, H, J, K, L, M, N constitute the membrane sector of the complex.

It localises to the cell inner membrane. The enzyme catalyses a quinone + NADH + 5 H(+)(in) = a quinol + NAD(+) + 4 H(+)(out). NDH-1 shuttles electrons from NADH, via FMN and iron-sulfur (Fe-S) centers, to quinones in the respiratory chain. The immediate electron acceptor for the enzyme in this species is believed to be ubiquinone. Couples the redox reaction to proton translocation (for every two electrons transferred, four hydrogen ions are translocated across the cytoplasmic membrane), and thus conserves the redox energy in a proton gradient. This chain is NADH-quinone oxidoreductase subunit K, found in Acidobacterium capsulatum (strain ATCC 51196 / DSM 11244 / BCRC 80197 / JCM 7670 / NBRC 15755 / NCIMB 13165 / 161).